Reading from the N-terminus, the 907-residue chain is Protein translocase subunit SecA (907 aa).

ATP is bound by residues Gln-87, 105-109, and Asp-512; that span reads GEGKT. The segment at 870–897 is disordered; sequence AALAATQPQVREGEKVGRNDPCPCGSGK. The Zn(2+) site is built by Cys-891, Cys-893, Cys-902, and His-903.

Belongs to the SecA family. As to quaternary structure, monomer and homodimer. Part of the essential Sec protein translocation apparatus which comprises SecA, SecYEG and auxiliary proteins SecDF-YajC and YidC. Zn(2+) serves as cofactor.

It localises to the cell inner membrane. The protein localises to the cytoplasm. The catalysed reaction is ATP + H2O + cellular proteinSide 1 = ADP + phosphate + cellular proteinSide 2.. Part of the Sec protein translocase complex. Interacts with the SecYEG preprotein conducting channel. Has a central role in coupling the hydrolysis of ATP to the transfer of proteins into and across the cell membrane, serving both as a receptor for the preprotein-SecB complex and as an ATP-driven molecular motor driving the stepwise translocation of polypeptide chains across the membrane. This is Protein translocase subunit SecA from Shewanella piezotolerans (strain WP3 / JCM 13877).